A 628-amino-acid polypeptide reads, in one-letter code: Chaperone protein DnaK (628 aa).

Threonine 195 carries the phosphothreonine; by autocatalysis modification. The segment at 545-628 is disordered; the sequence is QLEENEGAAQ…VIDADFKAAE (84 aa). The segment covering 555 to 591 has biased composition (basic and acidic residues); the sequence is DAKDALKAAADEAEEAVRSEDDARIESAQKRLEEELR. Low complexity predominate over residues 596 to 612; sequence AQQAAGQGQPQGAQAQG. Basic and acidic residues predominate over residues 614–628; sequence KADDDVIDADFKAAE.

This sequence belongs to the heat shock protein 70 family.

In terms of biological role, acts as a chaperone. The polypeptide is Chaperone protein DnaK (Deinococcus deserti (strain DSM 17065 / CIP 109153 / LMG 22923 / VCD115)).